The following is a 90-amino-acid chain: UPF0729 protein Bm1_03610 (90 aa).

Belongs to the UPF0729 family.

This is UPF0729 protein Bm1_03610 from Brugia malayi (Filarial nematode worm).